A 301-amino-acid polypeptide reads, in one-letter code: Porphobilinogen deaminase (301 aa).

Residue Cys-235 is modified to S-(dipyrrolylmethanemethyl)cysteine.

Belongs to the HMBS family. Monomer. Dipyrromethane is required as a cofactor.

The enzyme catalyses 4 porphobilinogen + H2O = hydroxymethylbilane + 4 NH4(+). It functions in the pathway porphyrin-containing compound metabolism; protoporphyrin-IX biosynthesis; coproporphyrinogen-III from 5-aminolevulinate: step 2/4. Functionally, tetrapolymerization of the monopyrrole PBG into the hydroxymethylbilane pre-uroporphyrinogen in several discrete steps. The chain is Porphobilinogen deaminase from Thermus thermophilus (strain ATCC BAA-163 / DSM 7039 / HB27).